We begin with the raw amino-acid sequence, 102 residues long: Glutaredoxin-C14 (102 aa).

The Glutaredoxin domain occupies 1-101 (MDKVMRMSSE…PLIKPYQSFH (101 aa)). C21 and C24 are joined by a disulfide.

Belongs to the glutaredoxin family. CC-type subfamily.

Its subcellular location is the cytoplasm. Its function is as follows. Has a glutathione-disulfide oxidoreductase activity in the presence of NADPH and glutathione reductase. Reduces low molecular weight disulfides and proteins. The sequence is that of Glutaredoxin-C14 (GRXC14) from Arabidopsis thaliana (Mouse-ear cress).